The chain runs to 338 residues: dTDP-glucose 4,6-dehydratase (338 aa).

Residues 12 to 13 (FI), 33 to 36 (DKLT), 59 to 60 (DI), 81 to 85 (LAAES), and threonine 100 each bind NAD(+). Serine 85 contributes to the substrate binding site. Threonine 134 is a substrate binding site. The active-site Proton donor is the aspartate 135. Catalysis depends on proton acceptor residues glutamate 136 and tyrosine 160. 160 to 164 (YSASK) is a binding site for NAD(+). Substrate is bound at residue asparagine 189. Residue asparagine 190 participates in NAD(+) binding. Residues 199–200 (KL), 215–217 (PIY), arginine 224, asparagine 259, and 293–297 (DRPGH) each bind substrate.

This sequence belongs to the NAD(P)-dependent epimerase/dehydratase family. dTDP-glucose dehydratase subfamily. As to quaternary structure, homodimer. The cofactor is NAD(+).

The enzyme catalyses dTDP-alpha-D-glucose = dTDP-4-dehydro-6-deoxy-alpha-D-glucose + H2O. Its pathway is carbohydrate biosynthesis; dTDP-L-rhamnose biosynthesis. It functions in the pathway bacterial outer membrane biogenesis; LPS O-antigen biosynthesis. Catalyzes the dehydration of dTDP-D-glucose to form dTDP-6-deoxy-D-xylo-4-hexulose via a three-step process involving oxidation, dehydration and reduction. The protein is dTDP-glucose 4,6-dehydratase (rffG) of Haemophilus influenzae (strain ATCC 51907 / DSM 11121 / KW20 / Rd).